A 120-amino-acid chain; its full sequence is Small ribosomal subunit protein eS17 (120 aa).

The protein belongs to the eukaryotic ribosomal protein eS17 family. In terms of assembly, component of the small ribosomal subunit.

It is found in the cytoplasm. The chain is Small ribosomal subunit protein eS17 (RPS17) from Encephalitozoon cuniculi (strain GB-M1) (Microsporidian parasite).